Here is a 385-residue protein sequence, read N- to C-terminus: GTPase Obg (385 aa).

Residues 1-159 (MHFIDQAEIE…RRLRLELKLI (159 aa)) enclose the Obg domain. An OBG-type G domain is found at 160–328 (AEVGIVGMPN…LLQRVWQCLG (169 aa)). Residues 166-173 (GMPNAGKS), 191-195 (FTTLQ), 213-216 (DIPG), 280-283 (NKID), and 309-311 (SAV) contribute to the GTP site. Residues serine 173 and threonine 193 each contribute to the Mg(2+) site.

Belongs to the TRAFAC class OBG-HflX-like GTPase superfamily. OBG GTPase family. In terms of assembly, monomer. It depends on Mg(2+) as a cofactor.

It localises to the cytoplasm. Its function is as follows. An essential GTPase which binds GTP, GDP and possibly (p)ppGpp with moderate affinity, with high nucleotide exchange rates and a fairly low GTP hydrolysis rate. Plays a role in control of the cell cycle, stress response, ribosome biogenesis and in those bacteria that undergo differentiation, in morphogenesis control. The chain is GTPase Obg from Synechococcus sp. (strain JA-3-3Ab) (Cyanobacteria bacterium Yellowstone A-Prime).